Reading from the N-terminus, the 249-residue chain is Adapter protein MecA (249 aa).

This sequence belongs to the MecA family. As to quaternary structure, homodimer.

Enables the recognition and targeting of unfolded and aggregated proteins to the ClpC protease or to other proteins involved in proteolysis. This chain is Adapter protein MecA, found in Streptococcus thermophilus (strain ATCC BAA-250 / LMG 18311).